We begin with the raw amino-acid sequence, 31 residues long: Bacteriocin leucocin-B (31 aa).

It localises to the secreted. Its function is as follows. Inhibits a wide spectrum of lactic acid bacteria. The polypeptide is Bacteriocin leucocin-B (Leuconostoc mesenteroides).